The sequence spans 310 residues: Coproporphyrin III ferrochelatase (310 aa).

Fe-coproporphyrin III-binding positions include Y13, R30, R46 to Y47, S54, and Y125. Positions 181 and 262 each coordinate Fe(2+).

The protein belongs to the ferrochelatase family.

Its subcellular location is the cytoplasm. It catalyses the reaction Fe-coproporphyrin III + 2 H(+) = coproporphyrin III + Fe(2+). Its pathway is porphyrin-containing compound metabolism; protoheme biosynthesis. Involved in coproporphyrin-dependent heme b biosynthesis. Catalyzes the insertion of ferrous iron into coproporphyrin III to form Fe-coproporphyrin III. The protein is Coproporphyrin III ferrochelatase of Halalkalibacterium halodurans (strain ATCC BAA-125 / DSM 18197 / FERM 7344 / JCM 9153 / C-125) (Bacillus halodurans).